The following is a 469-amino-acid chain: Citrate synthase, mitochondrial (469 aa).

Residues 1–31 (MTLLTASSRAAARLLGAKNSSCIIFAARHAS) constitute a mitochondrion transit peptide. Active-site residues include His-304 and His-350. Residue Arg-359 participates in oxaloacetate binding. Residue Asp-405 is part of the active site. Positions 431 and 451 each coordinate oxaloacetate.

The protein belongs to the citrate synthase family. As to quaternary structure, homodimer.

It is found in the mitochondrion matrix. It catalyses the reaction oxaloacetate + acetyl-CoA + H2O = citrate + CoA + H(+). It participates in carbohydrate metabolism; tricarboxylic acid cycle; isocitrate from oxaloacetate: step 1/2. In terms of biological role, key enzyme of the Krebs tricarboxylic acid cycle which catalyzes the synthesis of citrate from acetyl coenzyme A and oxaloacetate. This Amblyrhynchus cristatus (Galapagos marine iguana) protein is Citrate synthase, mitochondrial (CS).